The following is a 238-amino-acid chain: UDP-2,3-diacylglucosamine hydrolase (238 aa).

Residues aspartate 8, histidine 10, aspartate 41, asparagine 78, and histidine 113 each coordinate Mn(2+). Asparagine 78 to arginine 79 lines the substrate pocket. Residues aspartate 121, serine 159, asparagine 163, lysine 166, and histidine 194 each contribute to the substrate site. Residues histidine 194 and histidine 196 each contribute to the Mn(2+) site.

It belongs to the LpxH family. The cofactor is Mn(2+).

Its subcellular location is the cell inner membrane. The enzyme catalyses UDP-2-N,3-O-bis[(3R)-3-hydroxytetradecanoyl]-alpha-D-glucosamine + H2O = 2-N,3-O-bis[(3R)-3-hydroxytetradecanoyl]-alpha-D-glucosaminyl 1-phosphate + UMP + 2 H(+). The protein operates within glycolipid biosynthesis; lipid IV(A) biosynthesis; lipid IV(A) from (3R)-3-hydroxytetradecanoyl-[acyl-carrier-protein] and UDP-N-acetyl-alpha-D-glucosamine: step 4/6. Functionally, hydrolyzes the pyrophosphate bond of UDP-2,3-diacylglucosamine to yield 2,3-diacylglucosamine 1-phosphate (lipid X) and UMP by catalyzing the attack of water at the alpha-P atom. Involved in the biosynthesis of lipid A, a phosphorylated glycolipid that anchors the lipopolysaccharide to the outer membrane of the cell. The chain is UDP-2,3-diacylglucosamine hydrolase from Shewanella halifaxensis (strain HAW-EB4).